The primary structure comprises 357 residues: 3-isopropylmalate dehydrogenase (357 aa).

Substrate-binding residues include Arg-99, Arg-109, Arg-133, and Asp-223. 3 residues coordinate Mg(2+): Asp-223, Asp-247, and Asp-251. 283 to 295 is an NAD(+) binding site; that stretch reads GSAPDIAGEQRAD.

It belongs to the isocitrate and isopropylmalate dehydrogenases family. LeuB type 2 subfamily. As to quaternary structure, homodimer. Mg(2+) is required as a cofactor. Requires Mn(2+) as cofactor.

It is found in the cytoplasm. It carries out the reaction (2R,3S)-3-isopropylmalate + NAD(+) = 4-methyl-2-oxopentanoate + CO2 + NADH. It functions in the pathway amino-acid biosynthesis; L-leucine biosynthesis; L-leucine from 3-methyl-2-oxobutanoate: step 3/4. Functionally, catalyzes the oxidation of 3-carboxy-2-hydroxy-4-methylpentanoate (3-isopropylmalate) to 3-carboxy-4-methyl-2-oxopentanoate. The product decarboxylates to 4-methyl-2 oxopentanoate. The sequence is that of 3-isopropylmalate dehydrogenase from Leifsonia xyli subsp. xyli (strain CTCB07).